Consider the following 67-residue polypeptide: MSGCWARRARPWIRWRTSKVSCARCKNAWARRRARRYTRPPPSRRLCTGSRRVWSRCAPSCARSRNA.

This is an uncharacterized protein from Lymantria dispar multicapsid nuclear polyhedrosis virus (LdMNPV).